We begin with the raw amino-acid sequence, 257 residues long: Imidazole glycerol phosphate synthase subunit HisF (257 aa).

Active-site residues include Asp11 and Asp130.

This sequence belongs to the HisA/HisF family. In terms of assembly, heterodimer of HisH and HisF.

It localises to the cytoplasm. The catalysed reaction is 5-[(5-phospho-1-deoxy-D-ribulos-1-ylimino)methylamino]-1-(5-phospho-beta-D-ribosyl)imidazole-4-carboxamide + L-glutamine = D-erythro-1-(imidazol-4-yl)glycerol 3-phosphate + 5-amino-1-(5-phospho-beta-D-ribosyl)imidazole-4-carboxamide + L-glutamate + H(+). Its pathway is amino-acid biosynthesis; L-histidine biosynthesis; L-histidine from 5-phospho-alpha-D-ribose 1-diphosphate: step 5/9. Its function is as follows. IGPS catalyzes the conversion of PRFAR and glutamine to IGP, AICAR and glutamate. The HisF subunit catalyzes the cyclization activity that produces IGP and AICAR from PRFAR using the ammonia provided by the HisH subunit. The polypeptide is Imidazole glycerol phosphate synthase subunit HisF (Psychromonas ingrahamii (strain DSM 17664 / CCUG 51855 / 37)).